The following is a 570-amino-acid chain: Alpha-1,2-mannosyltransferase ALG9 (570 aa).

A disordered region spans residues 1–37 (MDLTTTRQRRPLISDSSSSSSTKSYSKTDKPGRSNGG). Low complexity predominate over residues 14-25 (SDSSSSSSTKSY). The next 8 helical transmembrane spans lie at 129–149 (AVRL…VVAL), 160–180 (YAVA…SFLP), 208–228 (VVGV…VVIY), 237–257 (AFIA…LVDY), 297–317 (FNNF…YPVI), 324–344 (ALLV…LQPH), 349–369 (FLYP…ENIP), and 381–401 (SLLV…ILCA). N-linked (GlcNAc...) asparagine glycosylation occurs at asparagine 473.

The protein belongs to the glycosyltransferase 22 family.

The protein localises to the endoplasmic reticulum membrane. It catalyses the reaction an alpha-D-Man-(1-&gt;2)-alpha-D-Man-(1-&gt;2)-alpha-D-Man-(1-&gt;3)-[alpha-D-Man-(1-&gt;3)-alpha-D-Man-(1-&gt;6)]-beta-D-Man-(1-&gt;4)-beta-D-GlcNAc-(1-&gt;4)-alpha-D-GlcNAc-diphospho-di-trans,poly-cis-dolichol + a di-trans,poly-cis-dolichyl beta-D-mannosyl phosphate = an alpha-D-Man-(1-&gt;2)-alpha-D-Man-(1-&gt;2)-alpha-D-Man-(1-&gt;3)-[alpha-D-Man-(1-&gt;2)-alpha-D-Man-(1-&gt;3)-alpha-D-Man-(1-&gt;6)]-beta-D-Man-(1-&gt;4)-beta-D-GlcNAc-(1-&gt;4)-alpha-D-GlcNAc-diphospho-di-trans,poly-cis-dolichol + a di-trans,poly-cis-dolichyl phosphate + H(+). The enzyme catalyses an alpha-D-Man-(1-&gt;2)-alpha-D-Man-(1-&gt;2)-alpha-D-Man-(1-&gt;3)-[alpha-D-Man-(1-&gt;2)-alpha-D-Man-(1-&gt;3)-[alpha-D-Man-(1-&gt;6)]-alpha-D-Man-(1-&gt;6)]-beta-D-Man-(1-&gt;4)-beta-D-GlcNAc-(1-&gt;4)-alpha-D-GlcNAc-diphospho-di-trans,poly-cis-dolichol + a di-trans,poly-cis-dolichyl beta-D-mannosyl phosphate = an alpha-D-Man-(1-&gt;2)-alpha-D-Man-(1-&gt;2)-alpha-D-Man-(1-&gt;3)-[alpha-D-Man-(1-&gt;2)-alpha-D-Man-(1-&gt;3)-[alpha-D-Man-(1-&gt;2)-alpha-D-Man-(1-&gt;6)]-alpha-D-Man-(1-&gt;6)]-beta-D-Man-(1-&gt;4)-beta-D-GlcNAc-(1-&gt;4)-alpha-D-GlcNAc-diphospho-di-trans,poly-cis-dolichol + a di-trans,poly-cis-dolichyl phosphate + H(+). It functions in the pathway protein modification; protein glycosylation. Mannosyltransferase that operates in the biosynthetic pathway of dolichol-linked oligosaccharides, the glycan precursors employed in protein asparagine (N)-glycosylation. The assembly of dolichol-linked oligosaccharides begins on the cytosolic side of the endoplasmic reticulum membrane and finishes in its lumen. The sequential addition of sugars to dolichol pyrophosphate produces dolichol-linked oligosaccharides containing fourteen sugars, including two GlcNAcs, nine mannoses and three glucoses. Once assembled, the oligosaccharide is transferred from the lipid to nascent proteins by oligosaccharyltransferases. In the lumen of the endoplasmic reticulum, catalyzes the addition of the seventh and ninth alpha-1,2-linked mannose residues to Man(6)GlcNAc(2)-PP-dolichol and Man(8)GlcNAc(2)-PP-dolichol respectively. This chain is Alpha-1,2-mannosyltransferase ALG9 (ALG9), found in Arabidopsis thaliana (Mouse-ear cress).